The primary structure comprises 260 residues: 3beta-hydroxysteroid dehydrogenase 2 (260 aa).

NAD(+) is bound by residues Asp-43, 69–70 (DV), Asn-96, Tyr-163, and Lys-167. Residue Tyr-163 is the Proton acceptor of the active site.

Belongs to the short-chain dehydrogenases/reductases (SDR) family.

The enzyme catalyses 3-oxo-5beta-cholan-24-oate + NADH + H(+) = isolithocholate + NAD(+). The catalysed reaction is 12alpha-hydroxy-3-oxo-5beta-cholan-24-oate + NADH + H(+) = isodeoxycholate + NAD(+). It carries out the reaction 12alpha-hydroxy-3-oxo-5beta-cholan-24-oate + NADPH + H(+) = isodeoxycholate + NADP(+). It catalyses the reaction 7alpha,12alpha-dihydroxy-3-oxo-5beta-cholan-24-oate + NADH + H(+) = isocholate + NAD(+). The enzyme catalyses 3-oxochenodeoxycholate + NADH + H(+) = isochenodeoxycholate + NAD(+). Functionally, involved in the modification of secondary bile acids into iso-bile acids (3beta-bile acids) via epimerization of the 3-OH group through a 3-oxo-intermediate. Catalyzes the reduction of 12-alpha-hydroxy-3-oxo-5-beta-cholan-24-oate (3-oxo-DCA) and 3-oxo-5-beta-cholan-24-oate (3-oxo-LCA) to yield isodeoxycholate (isoDCA) and isolithocholate (isoLCA), respectively. Is also able to catalyze the reduction of 3-dehydrocholate (3-oxo-CA or 7alpha,12alpha-dihydroxy-3-oxo-5beta-cholan-24-oate) and 7-alpha-hydroxy-3-oxo-5-beta-cholan-24-oate (3-oxo-CDCA), into isocholate (isoCA) and isochenodeoxycholate (isoCDCA), respectively. Accepts both NADH and NADPH as cosubstrates. The conversion of the abundant bile acid deoxycholate (DCA) into isoDCA by the gut bacterium E.lenta favors the growth of the keystone commensal genus Bacteroides, since isoDCA is less cytotoxic than its parent compound, DCA; iso-bile acids have thus a potential role in modulating gut community composition. The sequence is that of 3beta-hydroxysteroid dehydrogenase 2 from Eggerthella lenta (strain ATCC 25559 / DSM 2243 / CCUG 17323 / JCM 9979 / KCTC 3265 / NCTC 11813 / VPI 0255 / 1899 B) (Eubacterium lentum).